The primary structure comprises 408 residues: Ribonuclease T2-like (408 aa).

A signal peptide spans 1 to 25 (MLQSIPGPQHILKALTGSLGLSTIF). Cystine bridges form between cysteine 38/cysteine 56, cysteine 45/cysteine 92, cysteine 55/cysteine 158, and cysteine 100/cysteine 150. Histidine 85 is a catalytic residue. N-linked (GlcNAc...) asparagine glycosylation is present at asparagine 108. Active-site residues include glutamate 143 and histidine 147. Asparagine 173 is a glycosylation site (N-linked (GlcNAc...) asparagine). An intrachain disulfide couples cysteine 222 to cysteine 257. Residues 268–292 (KHREPSRTTDTPSQPTTTGTPFKGR) are disordered. The span at 275–288 (TTDTPSQPTTTGTP) shows a compositional bias: low complexity. Asparagine 372 carries N-linked (GlcNAc...) asparagine glycosylation.

This sequence belongs to the RNase T2 family.

The protein resides in the vacuole lumen. It is found in the cytoplasm. The enzyme catalyses a ribonucleotidyl-ribonucleotide-RNA + H2O = a 3'-end 3'-phospho-ribonucleotide-RNA + a 5'-end dephospho-ribonucleoside-RNA + H(+). Functionally, rnase which modulates cell survival under stress conditions. Released from the vacuole to the cytoplasm during stress to promote tRNA and rRNA cleavage and to activate separately a downstream pathway that promotes cell death. Involved in cell size, vacuolar morphology and growth at high temperatures and high salt concentration. This chain is Ribonuclease T2-like (rny1), found in Aspergillus fumigatus (strain ATCC MYA-4609 / CBS 101355 / FGSC A1100 / Af293) (Neosartorya fumigata).